A 456-amino-acid polypeptide reads, in one-letter code: Adenylosuccinate synthetase isozyme 2 (456 aa).

The tract at residues 1–24 (MAFAETYPAASSLPNGDCGRPRAR) is disordered. GTP-binding positions include 39-45 (GDEGKGK) and 67-69 (GHT). Aspartate 40 acts as the Proton acceptor in catalysis. Aspartate 40 and glycine 67 together coordinate Mg(2+). Aspartate 40 is a binding site for substrate. Residues 40–43 (DEGK), 65–68 (NAGH), threonine 162, arginine 176, asparagine 255, threonine 270, and arginine 334 each bind IMP. The Proton donor role is filled by histidine 68. 330–336 (VTTGRKR) lines the substrate pocket. Residues arginine 336, 362–364 (KLD), and 444–447 (GVGK) each bind GTP.

This sequence belongs to the adenylosuccinate synthetase family. As to quaternary structure, homodimer. Mg(2+) serves as cofactor.

Its subcellular location is the cytoplasm. The protein localises to the mitochondrion. The enzyme catalyses IMP + L-aspartate + GTP = N(6)-(1,2-dicarboxyethyl)-AMP + GDP + phosphate + 2 H(+). Its pathway is purine metabolism; AMP biosynthesis via de novo pathway; AMP from IMP: step 1/2. Its activity is regulated as follows. Inhibited competitively by AMP and IMP and non-competitively by fructose 1,6-bisphosphate. Its function is as follows. Plays an important role in the de novo pathway and in the salvage pathway of purine nucleotide biosynthesis. Catalyzes the first committed step in the biosynthesis of AMP from IMP. This Homo sapiens (Human) protein is Adenylosuccinate synthetase isozyme 2.